Consider the following 234-residue polypeptide: tRNA (guanine-N(1)-)-methyltransferase (234 aa).

S-adenosyl-L-methionine is bound by residues G115 and 135–140; that span reads VGDYIL.

It belongs to the RNA methyltransferase TrmD family. As to quaternary structure, homodimer.

It is found in the cytoplasm. The catalysed reaction is guanosine(37) in tRNA + S-adenosyl-L-methionine = N(1)-methylguanosine(37) in tRNA + S-adenosyl-L-homocysteine + H(+). In terms of biological role, specifically methylates guanosine-37 in various tRNAs. The sequence is that of tRNA (guanine-N(1)-)-methyltransferase from Rickettsia africae (strain ESF-5).